The following is a 468-amino-acid chain: ATP synthase subunit beta (468 aa).

An ATP-binding site is contributed by 155 to 162 (GGAGVGKT).

Belongs to the ATPase alpha/beta chains family. As to quaternary structure, F-type ATPases have 2 components, CF(1) - the catalytic core - and CF(0) - the membrane proton channel. CF(1) has five subunits: alpha(3), beta(3), gamma(1), delta(1), epsilon(1). CF(0) has three main subunits: a(1), b(2) and c(9-12). The alpha and beta chains form an alternating ring which encloses part of the gamma chain. CF(1) is attached to CF(0) by a central stalk formed by the gamma and epsilon chains, while a peripheral stalk is formed by the delta and b chains.

Its subcellular location is the cell membrane. It carries out the reaction ATP + H2O + 4 H(+)(in) = ADP + phosphate + 5 H(+)(out). In terms of biological role, produces ATP from ADP in the presence of a proton gradient across the membrane. The catalytic sites are hosted primarily by the beta subunits. The polypeptide is ATP synthase subunit beta (Streptococcus uberis (strain ATCC BAA-854 / 0140J)).